The chain runs to 537 residues: Putative cysteine ligase BshC (537 aa).

This sequence belongs to the BshC family.

Functionally, involved in bacillithiol (BSH) biosynthesis. May catalyze the last step of the pathway, the addition of cysteine to glucosamine malate (GlcN-Mal) to generate BSH. In Staphylococcus saprophyticus subsp. saprophyticus (strain ATCC 15305 / DSM 20229 / NCIMB 8711 / NCTC 7292 / S-41), this protein is Putative cysteine ligase BshC.